Consider the following 299-residue polypeptide: Leucine zipper transcription factor-like protein 1 (299 aa).

A coiled-coil region spans residues Leu-96–Glu-296. Positions Gly-145–Asp-299 are interaction with BSS9.

The protein belongs to the LZTFL1 family. Self-associates. Interacts with BBS9; the interaction mediates the association of LZTL1 with the BBsome complex and regulates BBSome ciliary trafficking.

The protein localises to the cytoplasm. Its function is as follows. Regulates ciliary localization of the BBSome complex. Together with the BBSome complex, controls SMO ciliary trafficking and contributes to the sonic hedgehog (SHH) pathway regulation. May play a role in neurite outgrowth. May have tumor suppressor function. This chain is Leucine zipper transcription factor-like protein 1 (LZTFL1), found in Pongo abelii (Sumatran orangutan).